We begin with the raw amino-acid sequence, 955 residues long: Protein translocase subunit SecA (955 aa).

Residues Gln87, 105-109, and Asp494 each bind ATP; that span reads GEGKT. Positions 861–955 are disordered; sequence AAPAPAAPRP…KKAPRTKRKR (95 aa). The span at 874–888 shows a compositional bias: low complexity; sequence QEAAQQAQGTAAPSA. A compositionally biased stretch (basic residues) spans 943–955; that stretch reads SKGKKAPRTKRKR.

It belongs to the SecA family. Monomer and homodimer. Part of the essential Sec protein translocation apparatus which comprises SecA, SecYEG and auxiliary proteins SecDF. Other proteins may also be involved.

The protein resides in the cell membrane. The protein localises to the cytoplasm. The catalysed reaction is ATP + H2O + cellular proteinSide 1 = ADP + phosphate + cellular proteinSide 2.. Functionally, part of the Sec protein translocase complex. Interacts with the SecYEG preprotein conducting channel. Has a central role in coupling the hydrolysis of ATP to the transfer of proteins into and across the cell membrane, serving as an ATP-driven molecular motor driving the stepwise translocation of polypeptide chains across the membrane. The sequence is that of Protein translocase subunit SecA from Rhodococcus opacus (strain B4).